Here is a 518-residue protein sequence, read N- to C-terminus: Putative malate dehydrogenase 1B (518 aa).

This sequence belongs to the LDH/MDH superfamily. MDH type 2 family.

This Homo sapiens (Human) protein is Putative malate dehydrogenase 1B (MDH1B).